The primary structure comprises 450 residues: Tubulin alpha-6 chain (450 aa).

7 residues coordinate GTP: glutamine 11, glutamate 71, glycine 144, threonine 145, threonine 179, asparagine 206, and asparagine 228. Glutamate 71 lines the Mg(2+) pocket. Glutamate 254 is a catalytic residue. Threonine 349 carries the phosphothreonine modification. The disordered stretch occupies residues 430–450; the sequence is KDYEEVGAEGGDDEDDEGEEY. Acidic residues predominate over residues 431–450; the sequence is DYEEVGAEGGDDEDDEGEEY.

This sequence belongs to the tubulin family. Dimer of alpha and beta chains. A typical microtubule is a hollow water-filled tube with an outer diameter of 25 nm and an inner diameter of 15 nM. Alpha-beta heterodimers associate head-to-tail to form protofilaments running lengthwise along the microtubule wall with the beta-tubulin subunit facing the microtubule plus end conferring a structural polarity. Microtubules usually have 13 protofilaments but different protofilament numbers can be found in some organisms and specialized cells. Interacts with TFCB. Mg(2+) serves as cofactor. In terms of processing, undergoes a tyrosination/detyrosination cycle, the cyclic removal and re-addition of a C-terminal tyrosine residue by the enzymes tubulin tyrosine carboxypeptidase (TTCP) and tubulin tyrosine ligase (TTL), respectively. Post-translationally, acetylation of alpha chains at Lys-40 stabilizes microtubules and affects affinity and processivity of microtubule motors. This modification has a role in multiple cellular functions, ranging from cell motility, cell cycle progression or cell differentiation to intracellular trafficking and signaling.

The protein resides in the cytoplasm. It is found in the cytoskeleton. It carries out the reaction GTP + H2O = GDP + phosphate + H(+). Tubulin is the major constituent of microtubules, a cylinder consisting of laterally associated linear protofilaments composed of alpha- and beta-tubulin heterodimers. Microtubules grow by the addition of GTP-tubulin dimers to the microtubule end, where a stabilizing cap forms. Below the cap, tubulin dimers are in GDP-bound state, owing to GTPase activity of alpha-tubulin. This chain is Tubulin alpha-6 chain (TUBA6), found in Arabidopsis thaliana (Mouse-ear cress).